The primary structure comprises 268 residues: tRNA pseudouridine synthase A (268 aa).

Aspartate 52 acts as the Nucleophile in catalysis. Tyrosine 110 lines the substrate pocket.

Belongs to the tRNA pseudouridine synthase TruA family. Homodimer.

It catalyses the reaction uridine(38/39/40) in tRNA = pseudouridine(38/39/40) in tRNA. Functionally, formation of pseudouridine at positions 38, 39 and 40 in the anticodon stem and loop of transfer RNAs. The polypeptide is tRNA pseudouridine synthase A (Prochlorococcus marinus (strain MIT 9312)).